Here is a 405-residue protein sequence, read N- to C-terminus: Threonine synthase (405 aa).

Lysine 106 is modified (N6-(pyridoxal phosphate)lysine). Pyridoxal 5'-phosphate-binding positions include asparagine 132, 233-237 (GNAGN), and threonine 371.

The protein belongs to the threonine synthase family. The cofactor is pyridoxal 5'-phosphate.

The enzyme catalyses O-phospho-L-homoserine + H2O = L-threonine + phosphate. It functions in the pathway amino-acid biosynthesis; L-threonine biosynthesis; L-threonine from L-aspartate: step 5/5. In terms of biological role, catalyzes the gamma-elimination of phosphate from L-phosphohomoserine and the beta-addition of water to produce L-threonine. This is Threonine synthase (thrC) from Methanocaldococcus jannaschii (strain ATCC 43067 / DSM 2661 / JAL-1 / JCM 10045 / NBRC 100440) (Methanococcus jannaschii).